The chain runs to 341 residues: Putative UPF0607 protein ENSP00000383783 (341 aa).

The span at 75-101 (EVRAEEPKEATEVKDQVETQGQEDNKR) shows a compositional bias: basic and acidic residues. Disordered regions lie at residues 75–115 (EVRA…TSSL) and 216–278 (GLLM…PPPA). The segment covering 234–245 (SSRSSPSRAASH) has biased composition (low complexity).

It belongs to the UPF0607 family.

The chain is Putative UPF0607 protein ENSP00000383783 from Homo sapiens (Human).